The chain runs to 561 residues: Ribulokinase (561 aa).

The protein belongs to the ribulokinase family.

It carries out the reaction D-ribulose + ATP = D-ribulose 5-phosphate + ADP + H(+). The enzyme catalyses L-ribulose + ATP = L-ribulose 5-phosphate + ADP + H(+). It functions in the pathway carbohydrate degradation; L-arabinose degradation via L-ribulose; D-xylulose 5-phosphate from L-arabinose (bacterial route): step 2/3. The polypeptide is Ribulokinase (Shouchella clausii (strain KSM-K16) (Alkalihalobacillus clausii)).